Reading from the N-terminus, the 362-residue chain is Chorismate synthase (362 aa).

R47 provides a ligand contact to NADP(+). FMN-binding positions include 124–126 (RSS), G286, 301–305 (KPTAT), and R327.

This sequence belongs to the chorismate synthase family. Homotetramer. Requires FMNH2 as cofactor.

The catalysed reaction is 5-O-(1-carboxyvinyl)-3-phosphoshikimate = chorismate + phosphate. The protein operates within metabolic intermediate biosynthesis; chorismate biosynthesis; chorismate from D-erythrose 4-phosphate and phosphoenolpyruvate: step 7/7. Its function is as follows. Catalyzes the anti-1,4-elimination of the C-3 phosphate and the C-6 proR hydrogen from 5-enolpyruvylshikimate-3-phosphate (EPSP) to yield chorismate, which is the branch point compound that serves as the starting substrate for the three terminal pathways of aromatic amino acid biosynthesis. This reaction introduces a second double bond into the aromatic ring system. This chain is Chorismate synthase, found in Synechococcus elongatus (strain ATCC 33912 / PCC 7942 / FACHB-805) (Anacystis nidulans R2).